We begin with the raw amino-acid sequence, 77 residues long: MSLEDDVKAIIVDQLGVSPEDVKVDSSFIEDLNADSLDLTELIMTLEEKFAFEISEDDAEQLRTVGDVIKYIQERQN.

The Carrier domain maps to 1 to 76; that stretch reads MSLEDDVKAI…DVIKYIQERQ (76 aa). Position 36 is an O-(pantetheine 4'-phosphoryl)serine (serine 36).

This sequence belongs to the acyl carrier protein (ACP) family. In terms of processing, 4'-phosphopantetheine is transferred from CoA to a specific serine of apo-ACP by AcpS. This modification is essential for activity because fatty acids are bound in thioester linkage to the sulfhydryl of the prosthetic group.

Its subcellular location is the cytoplasm. It participates in lipid metabolism; fatty acid biosynthesis. Carrier of the growing fatty acid chain in fatty acid biosynthesis. This Chlamydia trachomatis serovar A (strain ATCC VR-571B / DSM 19440 / HAR-13) protein is Acyl carrier protein.